Reading from the N-terminus, the 166-residue chain is Large ribosomal subunit protein bL19 (166 aa).

This sequence belongs to the bacterial ribosomal protein bL19 family.

In terms of biological role, this protein is located at the 30S-50S ribosomal subunit interface and may play a role in the structure and function of the aminoacyl-tRNA binding site. The chain is Large ribosomal subunit protein bL19 from Chelativorans sp. (strain BNC1).